A 361-amino-acid chain; its full sequence is Peptide chain release factor 1 (361 aa).

Gln-237 carries the post-translational modification N5-methylglutamine. The interval 286-306 is disordered; it reads AKQDQEQAAKRKSLVGSGDRS.

This sequence belongs to the prokaryotic/mitochondrial release factor family. Methylated by PrmC. Methylation increases the termination efficiency of RF1.

Its subcellular location is the cytoplasm. Functionally, peptide chain release factor 1 directs the termination of translation in response to the peptide chain termination codons UAG and UAA. The protein is Peptide chain release factor 1 of Coxiella burnetii (strain CbuK_Q154) (Coxiella burnetii (strain Q154)).